Reading from the N-terminus, the 250-residue chain is tRNA (guanine-N(1)-)-methyltransferase (250 aa).

S-adenosyl-L-methionine-binding positions include G116 and 136 to 141 (IGDYVL).

This sequence belongs to the RNA methyltransferase TrmD family. As to quaternary structure, homodimer.

Its subcellular location is the cytoplasm. It carries out the reaction guanosine(37) in tRNA + S-adenosyl-L-methionine = N(1)-methylguanosine(37) in tRNA + S-adenosyl-L-homocysteine + H(+). In terms of biological role, specifically methylates guanosine-37 in various tRNAs. The polypeptide is tRNA (guanine-N(1)-)-methyltransferase (Pseudomonas putida (strain ATCC 700007 / DSM 6899 / JCM 31910 / BCRC 17059 / LMG 24140 / F1)).